Here is a 513-residue protein sequence, read N- to C-terminus: Maturase K (513 aa).

Belongs to the intron maturase 2 family. MatK subfamily.

Its subcellular location is the plastid. It is found in the chloroplast. Usually encoded in the trnK tRNA gene intron. Probably assists in splicing its own and other chloroplast group II introns. This chain is Maturase K, found in Eleusine indica (Goosegrass).